A 430-amino-acid polypeptide reads, in one-letter code: Adenylosuccinate synthetase (430 aa).

Residues Gly12–Lys18 and Gly40–Thr42 each bind GTP. Residue Asp13 is the Proton acceptor of the active site. Asp13 and Gly40 together coordinate Mg(2+). IMP-binding positions include Asp13–Lys16, Asn38–His41, Thr128, Arg142, Gln223, Thr238, and Arg302. Catalysis depends on His41, which acts as the Proton donor. Thr298–Arg304 contacts substrate. GTP-binding positions include Arg304, Ser330–Asp332, and Ser412–Gly414.

This sequence belongs to the adenylosuccinate synthetase family. Homodimer. Mg(2+) is required as a cofactor.

The protein localises to the cytoplasm. It catalyses the reaction IMP + L-aspartate + GTP = N(6)-(1,2-dicarboxyethyl)-AMP + GDP + phosphate + 2 H(+). It functions in the pathway purine metabolism; AMP biosynthesis via de novo pathway; AMP from IMP: step 1/2. Functionally, plays an important role in the de novo pathway of purine nucleotide biosynthesis. Catalyzes the first committed step in the biosynthesis of AMP from IMP. In Streptococcus equi subsp. zooepidemicus (strain H70), this protein is Adenylosuccinate synthetase.